The sequence spans 290 residues: Ribosomal RNA small subunit methyltransferase H (290 aa).

S-adenosyl-L-methionine-binding positions include glycine 35–histidine 37, aspartate 54, phenylalanine 81, aspartate 97, and glutamine 104.

It belongs to the methyltransferase superfamily. RsmH family.

The protein localises to the cytoplasm. The enzyme catalyses cytidine(1402) in 16S rRNA + S-adenosyl-L-methionine = N(4)-methylcytidine(1402) in 16S rRNA + S-adenosyl-L-homocysteine + H(+). Its function is as follows. Specifically methylates the N4 position of cytidine in position 1402 (C1402) of 16S rRNA. The chain is Ribosomal RNA small subunit methyltransferase H from Picosynechococcus sp. (strain ATCC 27264 / PCC 7002 / PR-6) (Agmenellum quadruplicatum).